Here is a 507-residue protein sequence, read N- to C-terminus: Glycerol kinase (507 aa).

Thr-12 contributes to the ADP binding site. 3 residues coordinate ATP: Thr-12, Thr-13, and Ser-14. Thr-12 contributes to the sn-glycerol 3-phosphate binding site. Residue Arg-16 participates in ADP binding. Positions 82, 83, 134, and 250 each coordinate sn-glycerol 3-phosphate. Positions 82, 83, 134, 250, and 251 each coordinate glycerol. Residues Thr-272 and Gly-316 each coordinate ADP. Residues Thr-272, Gly-316, Gln-320, and Gly-417 each contribute to the ATP site. 2 residues coordinate ADP: Gly-417 and Asn-421.

It belongs to the FGGY kinase family.

It carries out the reaction glycerol + ATP = sn-glycerol 3-phosphate + ADP + H(+). The protein operates within polyol metabolism; glycerol degradation via glycerol kinase pathway; sn-glycerol 3-phosphate from glycerol: step 1/1. With respect to regulation, inhibited by fructose 1,6-bisphosphate (FBP). In terms of biological role, key enzyme in the regulation of glycerol uptake and metabolism. Catalyzes the phosphorylation of glycerol to yield sn-glycerol 3-phosphate. This chain is Glycerol kinase, found in Beijerinckia indica subsp. indica (strain ATCC 9039 / DSM 1715 / NCIMB 8712).